A 391-amino-acid chain; its full sequence is UDP-N-acetylglucosamine--N-acetylmuramyl-(pentapeptide) pyrophosphoryl-undecaprenol N-acetylglucosamine transferase (391 aa).

Residues 11–13, R176, S206, and Q312 each bind UDP-N-acetyl-alpha-D-glucosamine; that span reads TGG.

Belongs to the glycosyltransferase 28 family. MurG subfamily.

The protein localises to the cell inner membrane. The enzyme catalyses di-trans,octa-cis-undecaprenyl diphospho-N-acetyl-alpha-D-muramoyl-L-alanyl-D-glutamyl-meso-2,6-diaminopimeloyl-D-alanyl-D-alanine + UDP-N-acetyl-alpha-D-glucosamine = di-trans,octa-cis-undecaprenyl diphospho-[N-acetyl-alpha-D-glucosaminyl-(1-&gt;4)]-N-acetyl-alpha-D-muramoyl-L-alanyl-D-glutamyl-meso-2,6-diaminopimeloyl-D-alanyl-D-alanine + UDP + H(+). The protein operates within cell wall biogenesis; peptidoglycan biosynthesis. Cell wall formation. Catalyzes the transfer of a GlcNAc subunit on undecaprenyl-pyrophosphoryl-MurNAc-pentapeptide (lipid intermediate I) to form undecaprenyl-pyrophosphoryl-MurNAc-(pentapeptide)GlcNAc (lipid intermediate II). This chain is UDP-N-acetylglucosamine--N-acetylmuramyl-(pentapeptide) pyrophosphoryl-undecaprenol N-acetylglucosamine transferase, found in Treponema denticola (strain ATCC 35405 / DSM 14222 / CIP 103919 / JCM 8153 / KCTC 15104).